The following is a 465-amino-acid chain: UDP-N-acetylmuramoylalanine--D-glutamate ligase (465 aa).

115 to 121 (GTDGKTT) is an ATP binding site.

Belongs to the MurCDEF family.

The protein resides in the cytoplasm. The enzyme catalyses UDP-N-acetyl-alpha-D-muramoyl-L-alanine + D-glutamate + ATP = UDP-N-acetyl-alpha-D-muramoyl-L-alanyl-D-glutamate + ADP + phosphate + H(+). It participates in cell wall biogenesis; peptidoglycan biosynthesis. Its function is as follows. Cell wall formation. Catalyzes the addition of glutamate to the nucleotide precursor UDP-N-acetylmuramoyl-L-alanine (UMA). In Chlorobaculum tepidum (strain ATCC 49652 / DSM 12025 / NBRC 103806 / TLS) (Chlorobium tepidum), this protein is UDP-N-acetylmuramoylalanine--D-glutamate ligase.